A 254-amino-acid chain; its full sequence is 5-oxoprolinase subunit A (254 aa).

The protein belongs to the LamB/PxpA family. Forms a complex composed of PxpA, PxpB and PxpC.

It catalyses the reaction 5-oxo-L-proline + ATP + 2 H2O = L-glutamate + ADP + phosphate + H(+). Functionally, catalyzes the cleavage of 5-oxoproline to form L-glutamate coupled to the hydrolysis of ATP to ADP and inorganic phosphate. The polypeptide is 5-oxoprolinase subunit A (Burkholderia lata (strain ATCC 17760 / DSM 23089 / LMG 22485 / NCIMB 9086 / R18194 / 383)).